The primary structure comprises 217 residues: tRNA (guanine-N(7)-)-methyltransferase (217 aa).

S-adenosyl-L-methionine contacts are provided by Glu44, Glu69, Asn96, and Asp118. Asp118 is an active-site residue. Lys122 provides a ligand contact to substrate. The interval 124–129 (RHEKRR) is interaction with RNA. Substrate-binding positions include Asp154 and 191–194 (TEYE).

Belongs to the class I-like SAM-binding methyltransferase superfamily. TrmB family.

The catalysed reaction is guanosine(46) in tRNA + S-adenosyl-L-methionine = N(7)-methylguanosine(46) in tRNA + S-adenosyl-L-homocysteine. Its pathway is tRNA modification; N(7)-methylguanine-tRNA biosynthesis. Its function is as follows. Catalyzes the formation of N(7)-methylguanine at position 46 (m7G46) in tRNA. The sequence is that of tRNA (guanine-N(7)-)-methyltransferase from Geobacillus kaustophilus (strain HTA426).